The primary structure comprises 510 residues: Chromosomal replication initiator protein DnaA (510 aa).

Residues 1–107 (MTNDPGSGFA…VRIAPPPADD (107 aa)) are domain I, interacts with DnaA modulators. Residues 107–169 (DDDDSVAAAV…ADTSASADGT (63 aa)) are domain II. Residues 119–168 (PGLEASPETSQEVSDEIDDFGENAPKSRQSWPTHFKKRSTDADTSASADG) form a disordered region. The segment at 170 to 386 (SLNRRYTFDT…GALIRVTAFA (217 aa)) is domain III, AAA+ region. ATP-binding residues include G214, G216, K217, and T218. The interval 387 to 510 (SLNKTPIDKA…TTRIRQRSKR (124 aa)) is domain IV, binds dsDNA.

It belongs to the DnaA family. In terms of assembly, oligomerizes as a right-handed, spiral filament on DNA at oriC.

The protein resides in the cytoplasm. Plays an essential role in the initiation and regulation of chromosomal replication. ATP-DnaA binds to the origin of replication (oriC) to initiate formation of the DNA replication initiation complex once per cell cycle. Binds the DnaA box (a 9 base pair repeat at the origin) and separates the double-stranded (ds)DNA. Forms a right-handed helical filament on oriC DNA; dsDNA binds to the exterior of the filament while single-stranded (ss)DNA is stabiized in the filament's interior. The ATP-DnaA-oriC complex binds and stabilizes one strand of the AT-rich DNA unwinding element (DUE), permitting loading of DNA polymerase. After initiation quickly degrades to an ADP-DnaA complex that is not apt for DNA replication. Binds acidic phospholipids. The polypeptide is Chromosomal replication initiator protein DnaA (Mycobacterium ulcerans (strain Agy99)).